We begin with the raw amino-acid sequence, 721 residues long: MIGKTYTTMLGGRELSIETGRLAKLVSGSVTLRYGDTMLLVTAQAREEKSPLDFLPLTVEFEERHYAVGKIPGSFHRREGRPGEKAILSARITDRQLRPLFPKGYRHETQVIITVLSADQQNAPDVLGPIGASAALSISDIPWGGPTACVRVGQVDGQFIVNPTADQLTRSRMDLVVAGTRDAVMMVEAGAQTVSEEDLVSAIEFAHAEMQGVIDLIERMRAEVGQEKFNFLAEGDLTQDLVPELAEKARAGGIRDALLTTKKKERSARTKAVRDAIIAGYVPDPNAEGAAARIASLKDAYAKVEKQELRRLILEEDLRADGRNGRAVRPIWIEARPLPRAHGSAIFTRGETQVLGVATLGTERDEILVDDLTTEDNDKFMLHYNFPPYSTGEVKRMGGQSRREIGHGHLAKRAIRAVLPSFEEFPYVIRLVGEVLESNGSSSMATVCAGVLALMDAGVPIKAPVAGVAMGLVMEGDKYRVLTDILGLEDALGDMDFKVCGTAEGVTALQMDIKVGGITPQVMREALAQAREGRLHILGKMAEVLSSPRPELSPTAPRIISIKINPELIGKVIGPGGKQVRELEAMGAQVTIEEDGTIRVFSADGAAAEAVRARIAGLTKEAKVGEEYEGTVVKTAPFGAFVNLYAGQDGMLHISQISEERLSAVEDALNVGDKLRVKIAGIDDRGKIDLIRPELEGKIAPREPRAPRGGGDRGPRPPRRD.

Residues Asp-490 and Asp-496 each contribute to the Mg(2+) site. In terms of domain architecture, KH spans 557–623 (PRIISIKINP…RIAGLTKEAK (67 aa)). In terms of domain architecture, S1 motif spans 625–693 (GEEYEGTVVK…DRGKIDLIRP (69 aa)). A disordered region spans residues 693 to 721 (PELEGKIAPREPRAPRGGGDRGPRPPRRD).

Belongs to the polyribonucleotide nucleotidyltransferase family. It depends on Mg(2+) as a cofactor.

It is found in the cytoplasm. The enzyme catalyses RNA(n+1) + phosphate = RNA(n) + a ribonucleoside 5'-diphosphate. Functionally, involved in mRNA degradation. Catalyzes the phosphorolysis of single-stranded polyribonucleotides processively in the 3'- to 5'-direction. This is Polyribonucleotide nucleotidyltransferase from Deinococcus deserti (strain DSM 17065 / CIP 109153 / LMG 22923 / VCD115).